We begin with the raw amino-acid sequence, 549 residues long: MKNINPTQTAAWQALQKHFDEMKDVTIADLFAKDGDRFSKFSATFNDQMLVDYSKNRITEETLAKLQDLAKECDLAGAIKSMFSGEKINRTENRAVLHVALRNRSNTPILVDGKDVMPEVNAVLEKMKTFSEAIISGEWKGYTGKAITDVVNIGIGGSDLGPYMVTEALRPYKNHLNMHFVSNVDGTHISEVLKKVNPETTLFLVASKTFTTQETMTNAHSARDWFLKAAGDEKHVAKHFAALSTNAKAVGEFGIDTANMFEFWDWVGGRYSLWSAIGLSIVLSIGFDNFVELLSGAHAMDKHFSTTPAEKNLPVLLALIGIWYNNFFGAETEAILPYDQYMHRFAAYFQQGNMESNGKYVDRNGNVVDYQTGPIIWGEPGTNGQHAFYQLIHQGTKMVPCDFIAPAITHNPLSDHHQKLLSNFFAQTEALAFGKSREVVEQEYRDQGKDPATLDYVVPFKVFEGNRPTNSILLREITPFSLGALIALYEHKIFTQGVILNIFTFDQWGVELGKQLANRILPELKDDKEISSHDSSTNGLINRYKAWRG.

K80, K228, and K234 each carry N6-acetyllysine. E355 acts as the Proton donor in catalysis. Active-site residues include H386 and K514.

It belongs to the GPI family.

It localises to the cytoplasm. It carries out the reaction alpha-D-glucose 6-phosphate = beta-D-fructose 6-phosphate. Its pathway is carbohydrate biosynthesis; gluconeogenesis. It functions in the pathway carbohydrate degradation; glycolysis; D-glyceraldehyde 3-phosphate and glycerone phosphate from D-glucose: step 2/4. Its function is as follows. Catalyzes the reversible isomerization of glucose-6-phosphate to fructose-6-phosphate. The protein is Glucose-6-phosphate isomerase of Shigella flexneri serotype 5b (strain 8401).